We begin with the raw amino-acid sequence, 246 residues long: Flagellar brake protein YcgR (246 aa).

In terms of domain architecture, PilZ spans 122 to 234 (QRREFFRIQT…PMETIIQRYV (113 aa)).

It belongs to the YcgR family. In terms of assembly, monomer. Interacts with the flagellar basal bodies.

The protein resides in the bacterial flagellum basal body. Functionally, acts as a flagellar brake, regulating swimming and swarming in a bis-(3'-5') cyclic diguanylic acid (c-di-GMP)-dependent manner. Binds 1 c-di-GMP dimer per subunit. Increasing levels of c-di-GMP lead to decreased motility. The chain is Flagellar brake protein YcgR from Chromobacterium violaceum (strain ATCC 12472 / DSM 30191 / JCM 1249 / CCUG 213 / NBRC 12614 / NCIMB 9131 / NCTC 9757 / MK).